We begin with the raw amino-acid sequence, 39 residues long: Decorsin (39 aa).

The high affinity binding domain stretch occupies residues 27-38; it reads CRFPRGDADPYC. A Cell attachment site motif is present at residues 31 to 33; sequence RGD.

Belongs to the ornatin family.

The protein resides in the secreted. Its function is as follows. Inhibits fibrinogen interaction with platelet receptors expressed on glycoprotein IIb-IIIa complex. May prevent blood from clotting during either feeding and/or storage of ingested blood. This is Decorsin from Macrobdella decora (North American leech).